A 276-amino-acid polypeptide reads, in one-letter code: Diaminopimelate epimerase (276 aa).

Substrate-binding residues include N13, Q46, and N66. C75 acts as the Proton donor in catalysis. Substrate contacts are provided by residues G76–N77, N159, N192, and E210–R211. Residue C219 is the Proton acceptor of the active site. G220–T221 contacts substrate.

This sequence belongs to the diaminopimelate epimerase family. In terms of assembly, homodimer.

The protein resides in the cytoplasm. The enzyme catalyses (2S,6S)-2,6-diaminopimelate = meso-2,6-diaminopimelate. It participates in amino-acid biosynthesis; L-lysine biosynthesis via DAP pathway; DL-2,6-diaminopimelate from LL-2,6-diaminopimelate: step 1/1. Catalyzes the stereoinversion of LL-2,6-diaminopimelate (L,L-DAP) to meso-diaminopimelate (meso-DAP), a precursor of L-lysine and an essential component of the bacterial peptidoglycan. The polypeptide is Diaminopimelate epimerase (Tolumonas auensis (strain DSM 9187 / NBRC 110442 / TA 4)).